Consider the following 454-residue polypeptide: tRNA-2-methylthio-N(6)-dimethylallyladenosine synthase (454 aa).

The MTTase N-terminal domain occupies 11 to 128 (KKLYIQTHGC…LPEMIETPRE (118 aa)). Residues C20, C57, C91, C165, C169, and C172 each coordinate [4Fe-4S] cluster. The region spanning 151–382 (EADGATAFVS…QTRIIQQAQE (232 aa)) is the Radical SAM core domain. Residues 385-449 (RRMVGNTERV…PNSLRGVLLG (65 aa)) form the TRAM domain.

Belongs to the methylthiotransferase family. MiaB subfamily. Monomer. The cofactor is [4Fe-4S] cluster.

The protein localises to the cytoplasm. It carries out the reaction N(6)-dimethylallyladenosine(37) in tRNA + (sulfur carrier)-SH + AH2 + 2 S-adenosyl-L-methionine = 2-methylsulfanyl-N(6)-dimethylallyladenosine(37) in tRNA + (sulfur carrier)-H + 5'-deoxyadenosine + L-methionine + A + S-adenosyl-L-homocysteine + 2 H(+). Its function is as follows. Catalyzes the methylthiolation of N6-(dimethylallyl)adenosine (i(6)A), leading to the formation of 2-methylthio-N6-(dimethylallyl)adenosine (ms(2)i(6)A) at position 37 in tRNAs that read codons beginning with uridine. This Saccharophagus degradans (strain 2-40 / ATCC 43961 / DSM 17024) protein is tRNA-2-methylthio-N(6)-dimethylallyladenosine synthase.